The sequence spans 77 residues: Large ribosomal subunit protein eL14 (77 aa).

The protein belongs to the eukaryotic ribosomal protein eL14 family.

This is Large ribosomal subunit protein eL14 from Methanococcus maripaludis (strain C7 / ATCC BAA-1331).